A 337-amino-acid polypeptide reads, in one-letter code: DNA-directed RNA polymerase subunit alpha (337 aa).

The segment at 1–233 is alpha N-terminal domain (alpha-NTD); it reads MVREKVTVST…DLFIPFLHIE (233 aa). The interval 265-337 is alpha C-terminal domain (alpha-CTD); sequence KKIALKSIFI…FVIDLAKNEF (73 aa).

The protein belongs to the RNA polymerase alpha chain family. In plastids the minimal PEP RNA polymerase catalytic core is composed of four subunits: alpha, beta, beta', and beta''. When a (nuclear-encoded) sigma factor is associated with the core the holoenzyme is formed, which can initiate transcription.

It is found in the plastid. It localises to the chloroplast. It carries out the reaction RNA(n) + a ribonucleoside 5'-triphosphate = RNA(n+1) + diphosphate. Functionally, DNA-dependent RNA polymerase catalyzes the transcription of DNA into RNA using the four ribonucleoside triphosphates as substrates. In Nicotiana tomentosiformis (Tobacco), this protein is DNA-directed RNA polymerase subunit alpha.